The following is a 104-amino-acid chain: Protamine-2 (104 aa).

Serine 8 and serine 10 each carry phosphoserine. The disordered stretch occupies residues 23–104; the sequence is WQEQGRNGQE…SRRRRRCRRY (82 aa). Low complexity predominate over residues 24–35; that stretch reads QEQGRNGQEEQG. Serine 37 carries the phosphoserine modification. Basic residues predominate over residues 54 to 104; the sequence is YRRRRCSRRRRYRIHRRRSRSCRRRRRRSCRYRRRPRRGCRSRRRRRCRRY.

Belongs to the protamine P2 family. Interacts with TDRP. In terms of processing, proteolytic processing into mature chains is required for histone eviction during spermatogenesis. Transition proteins (TNP1 and TNP2) are required for processing. Testis.

Its subcellular location is the nucleus. The protein resides in the chromosome. Protamines substitute for histones in the chromatin of sperm during the haploid phase of spermatogenesis. They compact sperm DNA into a highly condensed, stable and inactive complex. This is Protamine-2 (PRM2) from Callithrix jacchus (White-tufted-ear marmoset).